A 1295-amino-acid polypeptide reads, in one-letter code: Protein glp-1 (1295 aa).

The N-terminal stretch at 1 to 15 (MRVLLILLAFFAPIA) is a signal peptide. The Extracellular portion of the chain corresponds to 16 to 764 (SQLMGGECGR…NEIDEGWSRS (749 aa)). EGF-like domains follow at residues 19 to 58 (MGGE…AFCE), 117 to 152 (GVNP…SYCE), 154 to 190 (GIDH…RYCE), and 190 to 230 (ERTE…EFCN). 37 cysteine pairs are disulfide-bonded: C23/C35, C29/C46, C48/C57, C121/C131, C126/C140, C142/C151, C158/C169, C163/C178, C180/C189, C201/C206, C220/C229, C236/C248, C242/C257, C259/C268, C275/C286, C280/C296, C298/C307, C329/C342, C336/C347, C349/C358, C373/C384, C378/C394, C396/C405, C411/C422, C416/C431, C433/C442, C450/C461, C455/C467, C469/C478, C496/C519, C501/C514, C510/C526, C536/C560, C542/C555, C551/C567, C582/C595, and C591/C607. The region spanning 232–269 (DKNECLIEETCVNNSTCFNLHGDFTCTCKPGYAGKYCE) is the EGF-like 5; calcium-binding domain. Residues N244 and N245 are each glycosylated (N-linked (GlcNAc...) asparagine). EGF-like domains follow at residues 271-308 (AIDM…QRCE), 316-359 (GGIH…DRCE), 369-406 (DIQS…LNCE), 407-443 (QHLL…DYCE), and 446-479 (DRQL…PTCE). A glycan (N-linked (GlcNAc...) asparagine) is linked at N333. An N-linked (GlcNAc...) asparagine glycan is attached at N381. 3 LNR repeats span residues 496 to 532 (CEQR…GQRP), 536 to 577 (CQYP…CPAH), and 581 to 612 (HCIE…NGTE). Residues N609 and N675 are each glycosylated (N-linked (GlcNAc...) asparagine). The chain crosses the membrane as a helical span at residues 765–786 (QVILFACIAFLAFGTVVAGVIA). Residues 787 to 1295 (KNGPERSRKR…AEQMNGSFYC (509 aa)) are Cytoplasmic-facing. ANK repeat units follow at residues 961–990 (DENT…NPTI), 994–1023 (SERS…LLKE), 1030–1062 (NGMT…KLDY), 1074–1103 (KGRT…NKDK), and 1107–1136 (DGRT…SLGI). Residues 1177 to 1244 (IVKSGHGAKS…TTSTPNRMET (68 aa)) are disordered. Positions 1201–1210 (KTPTSAASSR) are enriched in polar residues. A compositionally biased stretch (low complexity) spans 1221-1239 (DGSFSSPSPHYYPTTTSTP).

Interacts with sel-10. As to quaternary structure, when activated, the glp-1/Notch intracellular domain (NICD) may become a component of a complex consisting of at least the NICD, lag-1 and lag-3. Upon binding its ligands, it is cleaved (S2 cleavage) in its extracellular domain, close to the transmembrane domain. S2 cleavage is probably mediated by the metalloproteases adm-4 and sup-17. It is then cleaved (S3 cleavage) downstream of its transmembrane domain, releasing it from the cell membrane; S3 cleavage requires a multiprotein gamma-secretase complex, which may include presenilin sel-12. In terms of tissue distribution, expressed in the distal mitotic region of the germ line. May be absent from the gonadal distal tip cell (DTC).

The protein localises to the cell membrane. It localises to the cell projection. It is found in the axon. Its subcellular location is the nucleus. Its function is as follows. Essential signaling protein which has a major role in germline and embryonic development; involved in cell fate decisions that require cell-cell interactions. Probable membrane-bound receptor for putative ligands lag-2 and apx-1. Upon ligand activation, and releasing from the cell membrane, the glp-1/Notch intracellular domain (NICD) probably forms a transcriptional activator complex with lag-1 and lag-3 and regulates expression of various genes; targets in the germline include lst-1 and sygl-1. Involved in the specification of the cell fates of the blastomeres, ABa and ABp. Proper signaling by glp-1 induces ABa descendants to produce anterior pharyngeal cells, and ABp descendants to adopt a different fate. Contributes to the establishment of the dorsal-ventral axis in early embryos. Required in postmitotic neurons in order to maintain the developmentally arrested larval state known as dauer, probably in response to lag-2. Regulates germ cell mitotic proliferation probably by regulating MAP kinase phosphatase lip-1 expression. Required for oocyte growth control. Plays a negative role in lifespan. The protein is Protein glp-1 of Caenorhabditis elegans.